The primary structure comprises 338 residues: NADPH dehydrogenase (338 aa).

22-25 provides a ligand contact to FMN; that stretch reads SPMC. Tyr27 lines the substrate pocket. The FMN site is built by Ala59 and Gln101. 163 to 166 serves as a coordination point for substrate; it reads HAAH. Residues Arg214 and 306-307 contribute to the FMN site; that span reads GR.

Belongs to the NADH:flavin oxidoreductase/NADH oxidase family. NamA subfamily. As to quaternary structure, homotetramer. FMN serves as cofactor.

It catalyses the reaction A + NADPH + H(+) = AH2 + NADP(+). Catalyzes the reduction of the double bond of an array of alpha,beta-unsaturated aldehydes and ketones. It also reduces the nitro group of nitroester and nitroaromatic compounds. It could have a role in detoxification processes. In Listeria innocua serovar 6a (strain ATCC BAA-680 / CLIP 11262), this protein is NADPH dehydrogenase.